The sequence spans 382 residues: uncharacterized protein (382 aa).

The helical transmembrane segment at 1 to 21 threads the bilayer; sequence MKIILVVFVLIFVGVIGFNMI.

It belongs to the membrane fusion protein (MFP) (TC 8.A.1) family.

It is found in the membrane. This is an uncharacterized protein from Haemophilus influenzae (strain ATCC 51907 / DSM 11121 / KW20 / Rd).